The chain runs to 156 residues: FAD synthase (156 aa).

Residues 9 to 10 (TF), 14 to 17 (HPGH), asparagine 92, and histidine 119 contribute to the ATP site.

It belongs to the archaeal FAD synthase family. As to quaternary structure, homodimer. Requires a divalent metal cation as cofactor.

It carries out the reaction FMN + ATP + H(+) = FAD + diphosphate. Its pathway is cofactor biosynthesis; FAD biosynthesis; FAD from FMN: step 1/1. Functionally, catalyzes the transfer of the AMP portion of ATP to flavin mononucleotide (FMN) to produce flavin adenine dinucleotide (FAD) coenzyme. This chain is FAD synthase, found in Methanospirillum hungatei JF-1 (strain ATCC 27890 / DSM 864 / NBRC 100397 / JF-1).